A 380-amino-acid polypeptide reads, in one-letter code: Protein Wnt-5a (380 aa).

The signal sequence occupies residues 1–37 (MKKPIGILSPGVALGTAGGAMSSKFFLMALATFFSFA). The propeptide occupies 38 to 61 (QVVIEANSWWSLGMNNPVQMSEVY). An intrachain disulfide couples cysteine 104 to cysteine 115. Asparagine 114 and asparagine 120 each carry an N-linked (GlcNAc...) asparagine glycan. Intrachain disulfides connect cysteine 154/cysteine 162, cysteine 164/cysteine 182, cysteine 238/cysteine 252, cysteine 240/cysteine 247, cysteine 309/cysteine 340, cysteine 325/cysteine 335, cysteine 339/cysteine 379, cysteine 355/cysteine 370, cysteine 357/cysteine 367, and cysteine 362/cysteine 363. Serine 244 carries O-palmitoleoyl serine; by PORCN lipidation. Residues asparagine 312 and asparagine 326 are each glycosylated (N-linked (GlcNAc...) asparagine).

This sequence belongs to the Wnt family. Forms a soluble 1:1 complex with AFM; this prevents oligomerization and is required for prolonged biological activity. The complex with AFM may represent the physiological form in body fluids. Homooligomer; disulfide-linked, leading to inactivation. Interacts with PORCN. Interacts with WLS. Interacts with glypican GCP3. Interacts with PKD1 (via extracellular domain). Interacts with TMEM67. In terms of processing, glycosylation is necessary for secretion but not for activity. Post-translationally, palmitoleoylation is required for efficient binding to frizzled receptors. Depalmitoleoylation leads to Wnt signaling pathway inhibition. Proteolytic processing by TIKI1 and TIKI2 promotes oxidation and formation of large disulfide-bond oligomers, leading to inactivation of WNT5A. In terms of tissue distribution, expressed in a gradient at the caudal end of the embryo during gastrulation and later in the distal-most aspect of several structures that extend from the body such as the limbs and genital tubercle.

It is found in the secreted. Its subcellular location is the extracellular space. It localises to the extracellular matrix. In terms of biological role, ligand for members of the frizzled family of seven transmembrane receptors. Can activate or inhibit canonical Wnt signaling, depending on receptor context. In the presence of FZD4, activates beta-catenin signaling. In the presence of ROR2, inhibits the canonical Wnt pathway by promoting beta-catenin degradation through a GSK3-independent pathway which involves down-regulation of beta-catenin-induced reporter gene expression. Suppression of the canonical pathway allows chondrogenesis to occur and inhibits tumor formation. Stimulates cell migration. Decreases proliferation, migration, invasiveness and clonogenicity of carcinoma cells and may act as a tumor suppressor. Mediates motility of melanoma cells. Required during embryogenesis for extension of the primary anterior-posterior axis and for outgrowth of limbs and the genital tubercle. Inhibits type II collagen expression in chondrocytes. The protein is Protein Wnt-5a (Wnt5a) of Mus musculus (Mouse).